A 407-amino-acid polypeptide reads, in one-letter code: Arginine biosynthesis bifunctional protein ArgJ (407 aa).

Residues threonine 157, lysine 183, threonine 194, glutamate 280, asparagine 402, and threonine 407 each coordinate substrate. The active-site Nucleophile is the threonine 194.

Belongs to the ArgJ family. In terms of assembly, heterotetramer of two alpha and two beta chains.

Its subcellular location is the cytoplasm. The catalysed reaction is N(2)-acetyl-L-ornithine + L-glutamate = N-acetyl-L-glutamate + L-ornithine. The enzyme catalyses L-glutamate + acetyl-CoA = N-acetyl-L-glutamate + CoA + H(+). Its pathway is amino-acid biosynthesis; L-arginine biosynthesis; L-ornithine and N-acetyl-L-glutamate from L-glutamate and N(2)-acetyl-L-ornithine (cyclic): step 1/1. The protein operates within amino-acid biosynthesis; L-arginine biosynthesis; N(2)-acetyl-L-ornithine from L-glutamate: step 1/4. Catalyzes two activities which are involved in the cyclic version of arginine biosynthesis: the synthesis of N-acetylglutamate from glutamate and acetyl-CoA as the acetyl donor, and of ornithine by transacetylation between N(2)-acetylornithine and glutamate. The protein is Arginine biosynthesis bifunctional protein ArgJ of Bacillus anthracis.